The primary structure comprises 1937 residues: Myosin-8 (1937 aa).

Residues 35–84 (DAKTSVFVAEPKESYVKSTIQSKEGGKVTVKTEGGATLTVREDQVFPMNP) enclose the Myosin N-terminal SH3-like domain. Threonine 66 and threonine 71 each carry phosphothreonine. Residues 88–781 (DKIEDMAMMT…LLGLLEEMRD (694 aa)) enclose the Myosin motor domain. Lysine 132 is modified (N6,N6,N6-trimethyllysine). 181-188 (GESGAGKT) contacts ATP. Position 389 is a phosphotyrosine (tyrosine 389). Residue serine 392 is modified to Phosphoserine. Threonine 419 carries the post-translational modification Phosphothreonine. Tyrosine 424 is modified (phosphotyrosine). Serine 625 carries the phosphoserine modification. The segment at 658–680 (LNKLMTNLRSTHPHFVRCIIPNE) is actin-binding. Histidine 756 bears the Pros-methylhistidine mark. Residues 760–774 (KFGHTKVFFKAGLLG) form an actin-binding region. The region spanning 781–813 (DEKLAQIITRTQAVCRGFLMRVEYQKMLQRREA) is the IQ domain. A coiled-coil region spans residues 842–1937 (LLKSAETEKE…REVHTKISAE (1096 aa)). Phosphoserine occurs at positions 1091 and 1095. A disordered region spans residues 1126–1146 (EAERASRAKAEKQRSDLSREL). The segment covering 1127 to 1146 (AERASRAKAEKQRSDLSREL) has biased composition (basic and acidic residues). Phosphoserine occurs at positions 1161, 1236, 1242, and 1260. 2 positions are modified to phosphothreonine: threonine 1264 and threonine 1285. Serine 1291, serine 1302, and serine 1305 each carry phosphoserine. Phosphotyrosine is present on tyrosine 1463. Residue threonine 1466 is modified to Phosphothreonine. Residue serine 1473 is modified to Phosphoserine. Phosphotyrosine is present on tyrosine 1491. Position 1494 is a phosphoserine (serine 1494). Position 1500 is a phosphothreonine (threonine 1500). Position 1513 is a phosphoserine (serine 1513). Threonine 1516 carries the phosphothreonine modification. Residues serine 1553, serine 1573, serine 1602, serine 1713, and serine 1725 each carry the phosphoserine modification. Position 1729 is a phosphothreonine (threonine 1729). Position 1738 is a phosphoserine (serine 1738).

The protein belongs to the TRAFAC class myosin-kinesin ATPase superfamily. Myosin family. As to quaternary structure, muscle myosin is a hexameric protein that consists of 2 heavy chain subunits (MHC), 2 alkali light chain subunits (MLC) and 2 regulatory light chain subunits (MLC-2).

It localises to the cytoplasm. The protein resides in the myofibril. Its function is as follows. Muscle contraction. This is Myosin-8 (MYH8) from Homo sapiens (Human).